Reading from the N-terminus, the 277-residue chain is Sulfur carrier protein FdhD (277 aa).

Cysteine 121 serves as the catalytic Cysteine persulfide intermediate. A Mo-bis(molybdopterin guanine dinucleotide)-binding site is contributed by phenylalanine 260 to arginine 265.

The protein belongs to the FdhD family.

The protein resides in the cytoplasm. Functionally, required for formate dehydrogenase (FDH) activity. Acts as a sulfur carrier protein that transfers sulfur from IscS to the molybdenum cofactor prior to its insertion into FDH. The chain is Sulfur carrier protein FdhD from Escherichia coli O81 (strain ED1a).